We begin with the raw amino-acid sequence, 264 residues long: Nicotinamide N-methyltransferase (264 aa).

Arginine 18 carries the post-translational modification Citrulline; alternate. Residues tyrosine 20 and tyrosine 25 each coordinate S-adenosyl-L-methionine. The residue at position 39 (lysine 39) is an N6-acetyllysine. Positions 63, 69, 85, and 90 each coordinate S-adenosyl-L-methionine. A Citrulline; alternate modification is found at arginine 132. S-adenosyl-L-methionine-binding positions include 142 to 143 (DV) and threonine 163. Arginine 181 carries the citrulline; alternate modification. 2 residues coordinate nicotinamide: aspartate 197 and serine 213.

Belongs to the class I-like SAM-binding methyltransferase superfamily. NNMT/PNMT/TEMT family. In terms of assembly, monomer. In terms of processing, deiminated by PADI1 and PADI2. Predominantly expressed in the liver. A lower expression is seen in the kidney, lung, skeletal muscle, placenta and heart. Not detected in the brain or pancreas.

It is found in the cytoplasm. The catalysed reaction is nicotinamide + S-adenosyl-L-methionine = 1-methylnicotinamide + S-adenosyl-L-homocysteine. It participates in cofactor metabolism. It functions in the pathway amino-acid degradation. Its activity is regulated as follows. Inactivated by deimination on Arg-132. Catalyzes the N-methylation of nicotinamide using the universal methyl donor S-adenosyl-L-methionine to form N1-methylnicotinamide and S-adenosyl-L-homocysteine, a predominant nicotinamide/vitamin B3 clearance pathway. Plays a central role in regulating cellular methylation potential, by consuming S-adenosyl-L-methionine and limiting its availability for other methyltransferases. Actively mediates genome-wide epigenetic and transcriptional changes through hypomethylation of repressive chromatin marks, such as H3K27me3. In a developmental context, contributes to low levels of the repressive histone marks that characterize pluripotent embryonic stem cell pre-implantation state. Acts as a metabolic regulator primarily on white adipose tissue energy expenditure as well as hepatic gluconeogenesis and cholesterol biosynthesis. In white adipocytes, regulates polyamine flux by consuming S-adenosyl-L-methionine which provides for propylamine group in polyamine biosynthesis, whereas by consuming nicotinamide controls NAD(+) levels through the salvage pathway. Via its product N1-methylnicotinamide regulates protein acetylation in hepatocytes, by repressing the ubiquitination and increasing the stability of SIRT1 deacetylase. Can also N-methylate other pyridines structurally related to nicotinamide and play a role in xenobiotic detoxification. The chain is Nicotinamide N-methyltransferase from Homo sapiens (Human).